A 98-amino-acid chain; its full sequence is Integration host factor subunit alpha (98 aa).

This sequence belongs to the bacterial histone-like protein family. Heterodimer of an alpha and a beta chain.

This protein is one of the two subunits of integration host factor, a specific DNA-binding protein that functions in genetic recombination as well as in transcriptional and translational control. The protein is Integration host factor subunit alpha of Marinomonas sp. (strain MWYL1).